Consider the following 311-residue polypeptide: Ribosomal RNA small subunit methyltransferase H (311 aa).

S-adenosyl-L-methionine contacts are provided by residues 34 to 36 (GGH), Asp54, Phe78, Asp100, and Gln107.

The protein belongs to the methyltransferase superfamily. RsmH family.

It is found in the cytoplasm. It carries out the reaction cytidine(1402) in 16S rRNA + S-adenosyl-L-methionine = N(4)-methylcytidine(1402) in 16S rRNA + S-adenosyl-L-homocysteine + H(+). In terms of biological role, specifically methylates the N4 position of cytidine in position 1402 (C1402) of 16S rRNA. This chain is Ribosomal RNA small subunit methyltransferase H, found in Hamiltonella defensa subsp. Acyrthosiphon pisum (strain 5AT).